Reading from the N-terminus, the 345-residue chain is S-adenosylmethionine:tRNA ribosyltransferase-isomerase (345 aa).

The protein belongs to the QueA family. Monomer.

Its subcellular location is the cytoplasm. It catalyses the reaction 7-aminomethyl-7-carbaguanosine(34) in tRNA + S-adenosyl-L-methionine = epoxyqueuosine(34) in tRNA + adenine + L-methionine + 2 H(+). It functions in the pathway tRNA modification; tRNA-queuosine biosynthesis. In terms of biological role, transfers and isomerizes the ribose moiety from AdoMet to the 7-aminomethyl group of 7-deazaguanine (preQ1-tRNA) to give epoxyqueuosine (oQ-tRNA). The protein is S-adenosylmethionine:tRNA ribosyltransferase-isomerase of Thermodesulfovibrio yellowstonii (strain ATCC 51303 / DSM 11347 / YP87).